Here is a 74-residue protein sequence, read N- to C-terminus: MKKNTPKSFEEALSRLESLTQSMQGEMPLEDALAAYQEGNELVRYCQTKLAQVEQKLQVLDADGTKELNLESDE.

The protein belongs to the XseB family. Heterooligomer composed of large and small subunits.

It is found in the cytoplasm. It catalyses the reaction Exonucleolytic cleavage in either 5'- to 3'- or 3'- to 5'-direction to yield nucleoside 5'-phosphates.. Its function is as follows. Bidirectionally degrades single-stranded DNA into large acid-insoluble oligonucleotides, which are then degraded further into small acid-soluble oligonucleotides. The chain is Exodeoxyribonuclease 7 small subunit from Neisseria gonorrhoeae (strain ATCC 700825 / FA 1090).